The following is a 208-amino-acid chain: LexA repressor (208 aa).

The H-T-H motif DNA-binding region spans 30 to 50 (VREIGKSVGLSSSSTVAAYLE). Active-site for autocatalytic cleavage activity residues include Ser129 and Lys167.

It belongs to the peptidase S24 family. In terms of assembly, homodimer.

It carries out the reaction Hydrolysis of Ala-|-Gly bond in repressor LexA.. In terms of biological role, represses a number of genes involved in the response to DNA damage (SOS response), including recA and lexA. In the presence of single-stranded DNA, RecA interacts with LexA causing an autocatalytic cleavage which disrupts the DNA-binding part of LexA, leading to derepression of the SOS regulon and eventually DNA repair. This is LexA repressor from Lacticaseibacillus casei (strain BL23) (Lactobacillus casei).